Here is a 114-residue protein sequence, read N- to C-terminus: Monothiol glutaredoxin-S8 (114 aa).

A Glutaredoxin domain is found at 1–113 (MDRVTRLASQ…PLLRDAGALW (113 aa)). Cys-21 lines the [2Fe-2S] cluster pocket.

Belongs to the glutaredoxin family. CC-type subfamily.

Its subcellular location is the cytoplasm. May only reduce GSH-thiol disulfides, but not protein disulfides. This is Monothiol glutaredoxin-S8 (GRXS8) from Oryza sativa subsp. japonica (Rice).